The following is a 30-amino-acid chain: GIPCGESCVYIPCITTAIGCSCKNKVCYRN.

Positions 1-30 form a cross-link, cyclopeptide (Gly-Asn); it reads GIPCGESCVYIPCITTAIGCSCKNKVCYRN. Intrachain disulfides connect Cys4–Cys20, Cys8–Cys22, and Cys13–Cys27.

This sequence belongs to the cyclotide family. Bracelet subfamily. In terms of processing, this is a cyclic peptide.

Functionally, probably participates in a plant defense mechanism. The protein is Cyclotide mden-I of Melicytus dentatus (Tree violet).